A 594-amino-acid polypeptide reads, in one-letter code: UvrABC system protein C (594 aa).

Residues 14 to 91 form the GIY-YIG domain; it reads DSPGCYLHKD…IQENMPKYNI (78 aa). The region spanning 196–231 is the UVR domain; sequence DKIIDDLRSKMLEASHNQEFERAAEYRDLISGIATM.

It belongs to the UvrC family. In terms of assembly, interacts with UvrB in an incision complex.

The protein resides in the cytoplasm. In terms of biological role, the UvrABC repair system catalyzes the recognition and processing of DNA lesions. UvrC both incises the 5' and 3' sides of the lesion. The N-terminal half is responsible for the 3' incision and the C-terminal half is responsible for the 5' incision. This Streptococcus equi subsp. zooepidemicus (strain H70) protein is UvrABC system protein C.